The chain runs to 89 residues: Small ribosomal subunit protein uS17 (89 aa).

This sequence belongs to the universal ribosomal protein uS17 family. As to quaternary structure, part of the 30S ribosomal subunit.

In terms of biological role, one of the primary rRNA binding proteins, it binds specifically to the 5'-end of 16S ribosomal RNA. This chain is Small ribosomal subunit protein uS17, found in Syntrophomonas wolfei subsp. wolfei (strain DSM 2245B / Goettingen).